The chain runs to 169 residues: MTKTDRVCVGAIAGAFGVKGEVRLKSFCTEPTDIASYGPLSTEKGDRSFRVTLTRPVAGGLGARLSDVTTKEEADALRGVGLYVDRARLPSLGDDEFYHADLIGLEVRDTGGALLGRVHAVHNHGAGDILEVAGAAGREGLLLPFTRAVVPTVDLAAGRIVADPPEGLD.

The region spanning 94-168 (DDEFYHADLI…RIVADPPEGL (75 aa)) is the PRC barrel domain.

This sequence belongs to the RimM family. Binds ribosomal protein uS19.

It localises to the cytoplasm. An accessory protein needed during the final step in the assembly of 30S ribosomal subunit, possibly for assembly of the head region. Essential for efficient processing of 16S rRNA. May be needed both before and after RbfA during the maturation of 16S rRNA. It has affinity for free ribosomal 30S subunits but not for 70S ribosomes. This is Ribosome maturation factor RimM from Cereibacter sphaeroides (strain ATCC 17023 / DSM 158 / JCM 6121 / CCUG 31486 / LMG 2827 / NBRC 12203 / NCIMB 8253 / ATH 2.4.1.) (Rhodobacter sphaeroides).